The sequence spans 174 residues: NADH-ubiquinone oxidoreductase chain 6 (174 aa).

4 helical membrane passes run 25 to 45 (SMGL…SIYV), 48 to 68 (FWFS…LFIY), 82 to 102 (FSLT…FFMI), and 143 to 163 (LITL…VKIT).

This sequence belongs to the complex I subunit 6 family.

The protein resides in the mitochondrion membrane. The catalysed reaction is a ubiquinone + NADH + 5 H(+)(in) = a ubiquinol + NAD(+) + 4 H(+)(out). Functionally, core subunit of the mitochondrial membrane respiratory chain NADH dehydrogenase (Complex I) that is believed to belong to the minimal assembly required for catalysis. Complex I functions in the transfer of electrons from NADH to the respiratory chain. The immediate electron acceptor for the enzyme is believed to be ubiquinone. This is NADH-ubiquinone oxidoreductase chain 6 (ND6) from Anopheles albimanus (New world malaria mosquito).